A 117-amino-acid chain; its full sequence is Envelope glycoprotein J (117 aa).

The signal sequence occupies residues 1–26 (MRSLLFVVGAWVAAAVTHLTPNAALA). Positions 26–64 (ATGTTPTVGANSTADPGTGANGTTVPAAGTPANSTTAAE) are disordered. A compositionally biased stretch (polar residues) spans 27-40 (TGTTPTVGANSTAD). Residues 27 to 73 (TGTTPTVGANSTADPGTGANGTTVPAAGTPANSTTAAETPAPFPPVD) lie on the Extracellular side of the membrane. 3 N-linked (GlcNAc...) asparagine; by host glycosylation sites follow: Asn-36, Asn-46, and Asn-58. The chain crosses the membrane as a helical span at residues 74–94 (FALPVVIGGLCALTLAAMGAG). The Cytoplasmic portion of the chain corresponds to 95 to 117 (ALLHRCCRRAAARRRQRAAYVYA).

Belongs to the alphaherpesvirinae glycoprotein J family.

It localises to the host Golgi apparatus membrane. The protein localises to the host endoplasmic reticulum membrane. The protein resides in the host endosome membrane. Its function is as follows. Inhibits host cell apoptosis. Induces an increase in reactive oxygen species (ROS) in the host cell. In Homo sapiens (Human), this protein is Envelope glycoprotein J (gJ).